Here is a 280-residue protein sequence, read N- to C-terminus: Phosphatidylserine decarboxylase proenzyme (280 aa).

Residues aspartate 90, histidine 146, and serine 247 each act as charge relay system; for autoendoproteolytic cleavage activity in the active site. The active-site Schiff-base intermediate with substrate; via pyruvic acid; for decarboxylase activity is the serine 247. Serine 247 carries the pyruvic acid (Ser); by autocatalysis modification.

Belongs to the phosphatidylserine decarboxylase family. PSD-B subfamily. Prokaryotic type I sub-subfamily. In terms of assembly, heterodimer of a large membrane-associated beta subunit and a small pyruvoyl-containing alpha subunit. Pyruvate is required as a cofactor. In terms of processing, is synthesized initially as an inactive proenzyme. Formation of the active enzyme involves a self-maturation process in which the active site pyruvoyl group is generated from an internal serine residue via an autocatalytic post-translational modification. Two non-identical subunits are generated from the proenzyme in this reaction, and the pyruvate is formed at the N-terminus of the alpha chain, which is derived from the carboxyl end of the proenzyme. The autoendoproteolytic cleavage occurs by a canonical serine protease mechanism, in which the side chain hydroxyl group of the serine supplies its oxygen atom to form the C-terminus of the beta chain, while the remainder of the serine residue undergoes an oxidative deamination to produce ammonia and the pyruvoyl prosthetic group on the alpha chain. During this reaction, the Ser that is part of the protease active site of the proenzyme becomes the pyruvoyl prosthetic group, which constitutes an essential element of the active site of the mature decarboxylase.

It localises to the cell membrane. The catalysed reaction is a 1,2-diacyl-sn-glycero-3-phospho-L-serine + H(+) = a 1,2-diacyl-sn-glycero-3-phosphoethanolamine + CO2. The protein operates within phospholipid metabolism; phosphatidylethanolamine biosynthesis; phosphatidylethanolamine from CDP-diacylglycerol: step 2/2. Its function is as follows. Catalyzes the formation of phosphatidylethanolamine (PtdEtn) from phosphatidylserine (PtdSer). In Myxococcus xanthus (strain DK1622), this protein is Phosphatidylserine decarboxylase proenzyme.